The following is a 322-amino-acid chain: Eukaryotic translation initiation factor 3 subunit I (322 aa).

WD repeat units lie at residues 4–43 (GHER…RLGT), 46–85 (GHQG…VIAS), 141–180 (MVES…KVVD), 184–223 (DHTA…CLKT), and 281–322 (GHFG…NIFE).

It belongs to the eIF-3 subunit I family. In terms of assembly, component of the eukaryotic translation initiation factor 3 (eIF-3) complex. The eIF-3 complex interacts with pix.

The protein localises to the cytoplasm. Functionally, component of the eukaryotic translation initiation factor 3 (eIF-3) complex, which is involved in protein synthesis of a specialized repertoire of mRNAs and, together with other initiation factors, stimulates binding of mRNA and methionyl-tRNAi to the 40S ribosome. The eIF-3 complex specifically targets and initiates translation of a subset of mRNAs involved in cell proliferation. The protein is Eukaryotic translation initiation factor 3 subunit I of Drosophila virilis (Fruit fly).